The chain runs to 261 residues: Sulfur carrier protein FdhD (261 aa).

The active-site Cysteine persulfide intermediate is the C105. Mo-bis(molybdopterin guanine dinucleotide) is bound at residue 245–250 (FIRGDR).

Belongs to the FdhD family.

The protein resides in the cytoplasm. Its function is as follows. Required for formate dehydrogenase (FDH) activity. Acts as a sulfur carrier protein that transfers sulfur from IscS to the molybdenum cofactor prior to its insertion into FDH. This is Sulfur carrier protein FdhD from Listeria innocua serovar 6a (strain ATCC BAA-680 / CLIP 11262).